A 157-amino-acid polypeptide reads, in one-letter code: Oocyte zinc finger protein XlCOF2 (157 aa).

C2H2-type zinc fingers lie at residues 6 to 28, 34 to 56, 79 to 101, 107 to 129, and 135 to 157; these read FTCTECGKNFSFTTSFIRHMRIH, YSCADCGKHFSEKMYLQFHQKNP, FTCTECGKCFSLSSYLHRHQRLH, FSCAECGKAFSGKAQLQDHQNTH, and FTCTECGKCFTRKGSLQMHQKIH.

This sequence belongs to the krueppel C2H2-type zinc-finger protein family.

Its subcellular location is the nucleus. Functionally, may be involved in transcriptional regulation. The chain is Oocyte zinc finger protein XlCOF2 from Xenopus laevis (African clawed frog).